Reading from the N-terminus, the 455-residue chain is tRNA modification GTPase MnmE (455 aa).

(6S)-5-formyl-5,6,7,8-tetrahydrofolate-binding residues include arginine 22, glutamate 85, and arginine 124. Positions 220–377 (GIYTVIVGRP…VEKAIKEAIL (158 aa)) constitute a TrmE-type G domain. Residue asparagine 230 coordinates K(+). GTP contacts are provided by residues 230–235 (NVGKSS), 249–255 (TDIPGTT), and 274–277 (DTAG). Serine 234 contributes to the Mg(2+) binding site. The K(+) site is built by threonine 249, isoleucine 251, and threonine 254. Mg(2+) is bound at residue threonine 255. Lysine 455 contributes to the (6S)-5-formyl-5,6,7,8-tetrahydrofolate binding site.

It belongs to the TRAFAC class TrmE-Era-EngA-EngB-Septin-like GTPase superfamily. TrmE GTPase family. In terms of assembly, homodimer. Heterotetramer of two MnmE and two MnmG subunits. Requires K(+) as cofactor.

It localises to the cytoplasm. In terms of biological role, exhibits a very high intrinsic GTPase hydrolysis rate. Involved in the addition of a carboxymethylaminomethyl (cmnm) group at the wobble position (U34) of certain tRNAs, forming tRNA-cmnm(5)s(2)U34. This chain is tRNA modification GTPase MnmE, found in Caldicellulosiruptor saccharolyticus (strain ATCC 43494 / DSM 8903 / Tp8T 6331).